The sequence spans 332 residues: tRNA-dihydrouridine synthase B (332 aa).

Residues 16–18 (PMA) and Gln70 contribute to the FMN site. Cys100 acts as the Proton donor in catalysis. Residues Lys139, 200–202 (NGD), and 224–225 (GR) contribute to the FMN site.

The protein belongs to the Dus family. DusB subfamily. FMN is required as a cofactor.

It carries out the reaction a 5,6-dihydrouridine in tRNA + NAD(+) = a uridine in tRNA + NADH + H(+). The enzyme catalyses a 5,6-dihydrouridine in tRNA + NADP(+) = a uridine in tRNA + NADPH + H(+). Functionally, catalyzes the synthesis of 5,6-dihydrouridine (D), a modified base found in the D-loop of most tRNAs, via the reduction of the C5-C6 double bond in target uridines. In Pasteurella multocida (strain Pm70), this protein is tRNA-dihydrouridine synthase B.